A 239-amino-acid polypeptide reads, in one-letter code: ATP-dependent dethiobiotin synthetase BioD (239 aa).

15–20 contacts ATP; the sequence is EIGKTF. T19 lines the Mg(2+) pocket. The active site involves K40. Residues D57, 118–121, and 178–179 contribute to the ATP site; these read EGVG and NH. D57 and E118 together coordinate Mg(2+).

This sequence belongs to the dethiobiotin synthetase family. In terms of assembly, homodimer. Mg(2+) is required as a cofactor.

It localises to the cytoplasm. It carries out the reaction (7R,8S)-7,8-diammoniononanoate + CO2 + ATP = (4R,5S)-dethiobiotin + ADP + phosphate + 3 H(+). The protein operates within cofactor biosynthesis; biotin biosynthesis; biotin from 7,8-diaminononanoate: step 1/2. Catalyzes a mechanistically unusual reaction, the ATP-dependent insertion of CO2 between the N7 and N8 nitrogen atoms of 7,8-diaminopelargonic acid (DAPA, also called 7,8-diammoniononanoate) to form a ureido ring. In Burkholderia cenocepacia (strain HI2424), this protein is ATP-dependent dethiobiotin synthetase BioD.